Consider the following 240-residue polypeptide: Proteasome subunit alpha (240 aa).

It belongs to the peptidase T1A family. The 20S proteasome core is composed of 14 alpha and 14 beta subunits that assemble into four stacked heptameric rings, resulting in a barrel-shaped structure. The two inner rings, each composed of seven catalytic beta subunits, are sandwiched by two outer rings, each composed of seven alpha subunits. The catalytic chamber with the active sites is on the inside of the barrel. Has a gated structure, the ends of the cylinder being occluded by the N-termini of the alpha-subunits. Is capped at one or both ends by the proteasome regulatory ATPase, PAN.

It localises to the cytoplasm. The formation of the proteasomal ATPase PAN-20S proteasome complex, via the docking of the C-termini of PAN into the intersubunit pockets in the alpha-rings, triggers opening of the gate for substrate entry. Interconversion between the open-gate and close-gate conformations leads to a dynamic regulation of the 20S proteasome proteolysis activity. Its function is as follows. Component of the proteasome core, a large protease complex with broad specificity involved in protein degradation. In Metallosphaera sedula (strain ATCC 51363 / DSM 5348 / JCM 9185 / NBRC 15509 / TH2), this protein is Proteasome subunit alpha.